The chain runs to 273 residues: Ribosomal RNA small subunit methyltransferase A (273 aa).

Residues asparagine 19, leucine 21, glycine 46, glutamate 71, aspartate 94, and asparagine 117 each contribute to the S-adenosyl-L-methionine site.

The protein belongs to the class I-like SAM-binding methyltransferase superfamily. rRNA adenine N(6)-methyltransferase family. RsmA subfamily.

The protein resides in the cytoplasm. The enzyme catalyses adenosine(1518)/adenosine(1519) in 16S rRNA + 4 S-adenosyl-L-methionine = N(6)-dimethyladenosine(1518)/N(6)-dimethyladenosine(1519) in 16S rRNA + 4 S-adenosyl-L-homocysteine + 4 H(+). Its function is as follows. Specifically dimethylates two adjacent adenosines (A1518 and A1519) in the loop of a conserved hairpin near the 3'-end of 16S rRNA in the 30S particle. May play a critical role in biogenesis of 30S subunits. The sequence is that of Ribosomal RNA small subunit methyltransferase A from Burkholderia ambifaria (strain MC40-6).